We begin with the raw amino-acid sequence, 615 residues long: Membrane protein insertase YidC (615 aa).

Helical transmembrane passes span leucine 9–proline 29, leucine 384–tyrosine 404, leucine 458–isoleucine 478, leucine 516–tryptophan 536, and tryptophan 556–tryptophan 576.

It belongs to the OXA1/ALB3/YidC family. Type 1 subfamily. In terms of assembly, interacts with the Sec translocase complex via SecD. Specifically interacts with transmembrane segments of nascent integral membrane proteins during membrane integration.

It localises to the cell inner membrane. In terms of biological role, required for the insertion and/or proper folding and/or complex formation of integral membrane proteins into the membrane. Involved in integration of membrane proteins that insert both dependently and independently of the Sec translocase complex, as well as at least some lipoproteins. Aids folding of multispanning membrane proteins. The sequence is that of Membrane protein insertase YidC from Caulobacter vibrioides (strain ATCC 19089 / CIP 103742 / CB 15) (Caulobacter crescentus).